The chain runs to 534 residues: Serine/threonine-protein kinase 35 (534 aa).

The interval 32 to 176 (VESHGSLGAQ…AAAARAMDPV (145 aa)) is disordered. Low complexity-rich tracts occupy residues 39–65 (GAQASPASAAAAEGSATRRARAATSRA) and 166–176 (PAAAARAMDPV). The 329-residue stretch at 202–530 (YSLLAEIGRG…FELETRMDQV (329 aa)) folds into the Protein kinase domain. Residues 208-216 (IGRGSYGVV) and Lys-231 each bind ATP. Asp-360 (proton acceptor) is an active-site residue.

It belongs to the protein kinase superfamily. Ser/Thr protein kinase family. As to quaternary structure, interacts with PDLIM1/CLP-36. Post-translationally, autophosphorylated. In terms of tissue distribution, expressed in testis.

The protein localises to the nucleus. It localises to the nucleolus. It is found in the cytoplasm. The catalysed reaction is L-seryl-[protein] + ATP = O-phospho-L-seryl-[protein] + ADP + H(+). It carries out the reaction L-threonyl-[protein] + ATP = O-phospho-L-threonyl-[protein] + ADP + H(+). In Homo sapiens (Human), this protein is Serine/threonine-protein kinase 35 (STK35).